The chain runs to 300 residues: UPF0761 membrane protein PSHAa0171 (300 aa).

6 consecutive transmembrane segments (helical) span residues 47-67 (LLSL…FPGF), 100-120 (NANQ…LLLI), 143-163 (FAVY…SIAV), 181-201 (FSGF…FIML), 215-235 (AIPG…GFAL), and 249-269 (AVAT…VVLL).

Belongs to the UPF0761 family.

It is found in the cell inner membrane. In Pseudoalteromonas translucida (strain TAC 125), this protein is UPF0761 membrane protein PSHAa0171.